The chain runs to 395 residues: NAD(P)H-quinone oxidoreductase subunit H (395 aa).

This sequence belongs to the complex I 49 kDa subunit family. NDH-1 can be composed of about 15 different subunits; different subcomplexes with different compositions have been identified which probably have different functions.

The protein resides in the cellular thylakoid membrane. The catalysed reaction is a plastoquinone + NADH + (n+1) H(+)(in) = a plastoquinol + NAD(+) + n H(+)(out). The enzyme catalyses a plastoquinone + NADPH + (n+1) H(+)(in) = a plastoquinol + NADP(+) + n H(+)(out). NDH-1 shuttles electrons from an unknown electron donor, via FMN and iron-sulfur (Fe-S) centers, to quinones in the respiratory and/or the photosynthetic chain. The immediate electron acceptor for the enzyme in this species is believed to be plastoquinone. Couples the redox reaction to proton translocation, and thus conserves the redox energy in a proton gradient. Cyanobacterial NDH-1 also plays a role in inorganic carbon-concentration. This is NAD(P)H-quinone oxidoreductase subunit H from Prochlorococcus marinus (strain MIT 9301).